The chain runs to 344 residues: uncharacterized protein (344 aa).

Basic and acidic residues predominate over residues 323–332 (KQQEQREQGR). Residues 323-344 (KQQEQREQGRRAAYLQQRGMER) are disordered.

This is an uncharacterized protein from Bacillus anthracis.